The sequence spans 35 residues: Jingzhaotoxin F6-27.63 (35 aa).

Disulfide bonds link Cys2-Cys17, Cys9-Cys22, and Cys16-Cys29.

Belongs to the neurotoxin 10 (Hwtx-1) family. 49 (Jztx-F6) subfamily. Expressed by the venom gland.

Its subcellular location is the secreted. Its function is as follows. Probable ion channel inhibitor. The protein is Jingzhaotoxin F6-27.63 of Chilobrachys guangxiensis (Chinese earth tiger tarantula).